A 115-amino-acid polypeptide reads, in one-letter code: Large ribosomal subunit protein bL19 (115 aa).

It belongs to the bacterial ribosomal protein bL19 family.

Its function is as follows. This protein is located at the 30S-50S ribosomal subunit interface and may play a role in the structure and function of the aminoacyl-tRNA binding site. This chain is Large ribosomal subunit protein bL19, found in Erwinia tasmaniensis (strain DSM 17950 / CFBP 7177 / CIP 109463 / NCPPB 4357 / Et1/99).